A 455-amino-acid chain; its full sequence is UDP-N-acetylmuramoylalanine--D-glutamate ligase (455 aa).

118-124 is an ATP binding site; that stretch reads GSNAKST.

It belongs to the MurCDEF family.

Its subcellular location is the cytoplasm. The enzyme catalyses UDP-N-acetyl-alpha-D-muramoyl-L-alanine + D-glutamate + ATP = UDP-N-acetyl-alpha-D-muramoyl-L-alanyl-D-glutamate + ADP + phosphate + H(+). The protein operates within cell wall biogenesis; peptidoglycan biosynthesis. Cell wall formation. Catalyzes the addition of glutamate to the nucleotide precursor UDP-N-acetylmuramoyl-L-alanine (UMA). The sequence is that of UDP-N-acetylmuramoylalanine--D-glutamate ligase from Chromohalobacter salexigens (strain ATCC BAA-138 / DSM 3043 / CIP 106854 / NCIMB 13768 / 1H11).